A 274-amino-acid chain; its full sequence is Probable endonuclease LCL3 (274 aa).

The helical transmembrane segment at 15–32 (AVLSIILTGSTLTLIYTY) threads the bilayer. One can recognise a TNase-like domain in the interval 53–261 (HWLYGKVTSV…RSRKKGLWIQ (209 aa)). The active site involves Arg151. Position 156 (Asp156) interacts with Ca(2+). Residues Glu159 and Arg199 contribute to the active site.

This sequence belongs to the LCL3 family.

It is found in the mitochondrion. The protein localises to the membrane. This Saccharomyces cerevisiae (strain RM11-1a) (Baker's yeast) protein is Probable endonuclease LCL3 (LCL3).